The following is a 234-amino-acid chain: Adenosine 5'-phosphosulfate reductase (234 aa).

[4Fe-4S] cluster contacts are provided by Cys120, Cys121, Cys203, and Cys206. Cys229 acts as the Nucleophile; cysteine thiosulfonate intermediate in catalysis.

It belongs to the PAPS reductase family. CysH subfamily. Requires [4Fe-4S] cluster as cofactor.

The protein resides in the cytoplasm. The catalysed reaction is [thioredoxin]-disulfide + sulfite + AMP + 2 H(+) = adenosine 5'-phosphosulfate + [thioredoxin]-dithiol. Its pathway is sulfur metabolism; hydrogen sulfide biosynthesis; sulfite from sulfate. Its function is as follows. Catalyzes the formation of sulfite from adenosine 5'-phosphosulfate (APS) using thioredoxin as an electron donor. The chain is Adenosine 5'-phosphosulfate reductase from Bacillus cereus (strain ATCC 14579 / DSM 31 / CCUG 7414 / JCM 2152 / NBRC 15305 / NCIMB 9373 / NCTC 2599 / NRRL B-3711).